The sequence spans 306 residues: D-alanine--D-alanine ligase (306 aa).

Catalysis depends on residues E18 and S150. The ATP-grasp domain maps to 104 to 303 (KMLWKAFGLP…FEQLVVKILE (200 aa)). 134-189 (VAKLGLPLMVKPSLEGSSVGLTKVKAVEELKSAVEYALKFDNTILIEEWLAGDELT) contacts ATP. Mg(2+) is bound by residues D257, E270, and N272. Residue S281 is part of the active site.

Belongs to the D-alanine--D-alanine ligase family. The cofactor is Mg(2+). It depends on Mn(2+) as a cofactor.

Its subcellular location is the cytoplasm. It catalyses the reaction 2 D-alanine + ATP = D-alanyl-D-alanine + ADP + phosphate + H(+). Its pathway is cell wall biogenesis; peptidoglycan biosynthesis. Its function is as follows. Cell wall formation. In Haemophilus influenzae (strain ATCC 51907 / DSM 11121 / KW20 / Rd), this protein is D-alanine--D-alanine ligase.